A 226-amino-acid chain; its full sequence is Staphylococcal superantigen-like 1 (226 aa).

The N-terminal stretch at 1–30 is a signal peptide; the sequence is MKFKAIAKASLALGMLATGVITSNVQSVQA.

Belongs to the staphylococcal/streptococcal toxin family. Homodimer.

It is found in the secreted. Functionally, mediates virulence by proteolytically cleaving host proteins, including collagens types I and IV as well as human cytokines IL8, IL17A, and IFN-gamma. In Staphylococcus aureus (strain NCTC 8325 / PS 47), this protein is Staphylococcal superantigen-like 1.